Reading from the N-terminus, the 417-residue chain is Serine hydroxymethyltransferase 2 (417 aa).

Residues leucine 121 and 125–127 (GHL) contribute to the (6S)-5,6,7,8-tetrahydrofolate site. Position 230 is an N6-(pyridoxal phosphate)lysine (lysine 230). Residue 355 to 357 (SPF) participates in (6S)-5,6,7,8-tetrahydrofolate binding.

It belongs to the SHMT family. As to quaternary structure, homodimer. It depends on pyridoxal 5'-phosphate as a cofactor.

The protein resides in the cytoplasm. It catalyses the reaction (6R)-5,10-methylene-5,6,7,8-tetrahydrofolate + glycine + H2O = (6S)-5,6,7,8-tetrahydrofolate + L-serine. It functions in the pathway one-carbon metabolism; tetrahydrofolate interconversion. The protein operates within amino-acid biosynthesis; glycine biosynthesis; glycine from L-serine: step 1/1. In terms of biological role, catalyzes the reversible interconversion of serine and glycine with tetrahydrofolate (THF) serving as the one-carbon carrier. This reaction serves as the major source of one-carbon groups required for the biosynthesis of purines, thymidylate, methionine, and other important biomolecules. Also exhibits THF-independent aldolase activity toward beta-hydroxyamino acids, producing glycine and aldehydes, via a retro-aldol mechanism. The protein is Serine hydroxymethyltransferase 2 of Pseudomonas fluorescens (strain ATCC BAA-477 / NRRL B-23932 / Pf-5).